Reading from the N-terminus, the 396-residue chain is Ribosomal RNA large subunit methyltransferase I (396 aa).

A PUA domain is found at Ala2–Phe79.

This sequence belongs to the methyltransferase superfamily. RlmI family.

The protein localises to the cytoplasm. It carries out the reaction cytidine(1962) in 23S rRNA + S-adenosyl-L-methionine = 5-methylcytidine(1962) in 23S rRNA + S-adenosyl-L-homocysteine + H(+). Specifically methylates the cytosine at position 1962 (m5C1962) of 23S rRNA. The protein is Ribosomal RNA large subunit methyltransferase I of Shewanella sp. (strain ANA-3).